Reading from the N-terminus, the 60-residue chain is UPF0337 protein asr1134 (60 aa).

Composition is skewed to basic and acidic residues over residues 1 to 18 and 29 to 60; these read MSLE…EGKA and PEDK…KKID. Positions 1 to 60 are disordered; it reads MSLEDRAKATGKNIEGKAQEALGNVTGDPEDKAEGKAKQAESEVRHGVEDVKDNVKKKID.

The protein belongs to the UPF0337 (CsbD) family.

The polypeptide is UPF0337 protein asr1134 (Nostoc sp. (strain PCC 7120 / SAG 25.82 / UTEX 2576)).